We begin with the raw amino-acid sequence, 100 residues long: UPF0251 protein VVA1436 (100 aa).

This sequence belongs to the UPF0251 family.

The protein is UPF0251 protein VVA1436 of Vibrio vulnificus (strain YJ016).